The sequence spans 398 residues: MNIHEYQAKAVLREFGVSVSKGVPILKASDAEAAAKQLGGPVWVVKSQIHAGGRGKGKFKEASAGDKGGVRLAKSIDEVKQFVDQMLGKTLVTVQTGPAGKQVNRLYLEEGADIDKEFYLSALVDRETSRIAFVVSTEGGMDIEKVAHDTPEKIVTFSVDPATGIMPHHGRKVAQALKLKGDQAKQAEKLVNQLYTAFIAKDMSMLEINPLILSKQGELRCLDAKISFDSNAIYRHPDVMELRDETEEDAKEIEASKYDLAYIALDGTIGCMVNGAGLAMATLDIIKLYGESPANFLDVGGGASEEKVTAAFKIITADPNVKGILVNIFGGIMKCDVIAAGVVAAVKAVGLKVPLVVRLEGTNVEEGKKIIRESGLNVLPADDLDDAAQKIVKAVKGK.

One can recognise an ATP-grasp domain in the interval 9–254; sequence KAVLREFGVS…ETEEDAKEIE (246 aa). ATP is bound by residues Lys-46, 53 to 55, Glu-109, Ala-112, and Glu-117; that span reads GRG. The Mg(2+) site is built by Asn-209 and Asp-223. Substrate-binding positions include Asn-274 and 331-333; that span reads GIM.

It belongs to the succinate/malate CoA ligase beta subunit family. As to quaternary structure, heterotetramer of two alpha and two beta subunits. The cofactor is Mg(2+).

It catalyses the reaction succinate + ATP + CoA = succinyl-CoA + ADP + phosphate. The catalysed reaction is GTP + succinate + CoA = succinyl-CoA + GDP + phosphate. Its pathway is carbohydrate metabolism; tricarboxylic acid cycle; succinate from succinyl-CoA (ligase route): step 1/1. Its function is as follows. Succinyl-CoA synthetase functions in the citric acid cycle (TCA), coupling the hydrolysis of succinyl-CoA to the synthesis of either ATP or GTP and thus represents the only step of substrate-level phosphorylation in the TCA. The beta subunit provides nucleotide specificity of the enzyme and binds the substrate succinate, while the binding sites for coenzyme A and phosphate are found in the alpha subunit. The sequence is that of Succinate--CoA ligase [ADP-forming] subunit beta from Afipia carboxidovorans (strain ATCC 49405 / DSM 1227 / KCTC 32145 / OM5) (Oligotropha carboxidovorans).